The following is a 118-amino-acid chain: Na(+)/H(+) antiporter subunit G1 (118 aa).

Helical transmembrane passes span I9–L29, A41–I61, and Q70–I90.

This sequence belongs to the CPA3 antiporters (TC 2.A.63) subunit G family. May form a heterooligomeric complex that consists of seven subunits: mnhA1, mnhB1, mnhC1, mnhD1, mnhE1, mnhF1 and mnhG1.

The protein resides in the cell membrane. Functionally, mnh complex is a Na(+)/H(+) antiporter involved in Na(+) excretion. This Staphylococcus saprophyticus subsp. saprophyticus (strain ATCC 15305 / DSM 20229 / NCIMB 8711 / NCTC 7292 / S-41) protein is Na(+)/H(+) antiporter subunit G1 (mnhG1).